The following is a 453-amino-acid chain: tRNA modification GTPase MnmE (453 aa).

3 residues coordinate (6S)-5-formyl-5,6,7,8-tetrahydrofolate: Arg22, Glu79, and Lys119. Residues 215–376 enclose the TrmE-type G domain; that stretch reads GMKVVIAGRP…LREHLKACMG (162 aa). Asn225 serves as a coordination point for K(+). Residues 225 to 230, 244 to 250, 269 to 272, and 334 to 337 each bind GTP; these read NAGKSS, TEIAGTT, DTAG, and NKAD. A Mg(2+)-binding site is contributed by Ser229. Residues Thr244, Ile246, and Thr249 each coordinate K(+). Residue Thr250 participates in Mg(2+) binding. (6S)-5-formyl-5,6,7,8-tetrahydrofolate is bound at residue Lys453.

This sequence belongs to the TRAFAC class TrmE-Era-EngA-EngB-Septin-like GTPase superfamily. TrmE GTPase family. As to quaternary structure, homodimer. Heterotetramer of two MnmE and two MnmG subunits. K(+) serves as cofactor.

The protein localises to the cytoplasm. In terms of biological role, exhibits a very high intrinsic GTPase hydrolysis rate. Involved in the addition of a carboxymethylaminomethyl (cmnm) group at the wobble position (U34) of certain tRNAs, forming tRNA-cmnm(5)s(2)U34. In Aeromonas salmonicida (strain A449), this protein is tRNA modification GTPase MnmE.